The following is a 423-amino-acid chain: Gamma-glutamyl phosphate reductase (423 aa).

Belongs to the gamma-glutamyl phosphate reductase family.

The protein localises to the cytoplasm. It carries out the reaction L-glutamate 5-semialdehyde + phosphate + NADP(+) = L-glutamyl 5-phosphate + NADPH + H(+). It functions in the pathway amino-acid biosynthesis; L-proline biosynthesis; L-glutamate 5-semialdehyde from L-glutamate: step 2/2. Its function is as follows. Catalyzes the NADPH-dependent reduction of L-glutamate 5-phosphate into L-glutamate 5-semialdehyde and phosphate. The product spontaneously undergoes cyclization to form 1-pyrroline-5-carboxylate. This is Gamma-glutamyl phosphate reductase from Brucella suis (strain ATCC 23445 / NCTC 10510).